Here is a 470-residue protein sequence, read N- to C-terminus: Cysteine--tRNA ligase (470 aa).

Cys31 contributes to the Zn(2+) binding site. The 'HIGH' region signature appears at 33–43 (PTVYDYVHIGH). Zn(2+) is bound by residues Cys209, His234, and Glu238. The 'KMSKS' region signature appears at 266 to 270 (KMSKS). Lys269 is a binding site for ATP.

This sequence belongs to the class-I aminoacyl-tRNA synthetase family. Zn(2+) is required as a cofactor.

The protein resides in the cytoplasm. The catalysed reaction is tRNA(Cys) + L-cysteine + ATP = L-cysteinyl-tRNA(Cys) + AMP + diphosphate. The polypeptide is Cysteine--tRNA ligase (Saccharolobus solfataricus (strain ATCC 35092 / DSM 1617 / JCM 11322 / P2) (Sulfolobus solfataricus)).